A 1849-amino-acid polypeptide reads, in one-letter code: Protein virilizer (1849 aa).

5 stretches are compositionally biased toward basic and acidic residues: residues 206–219 (QHYH…QREM), 242–265 (THSE…DWSR), 281–291 (RSRSDADEHKW), 332–347 (HSSE…EERS), and 785–818 (VEAK…AAEE). Disordered regions lie at residues 206–364 (QHYH…DEII), 783–818 (RVVE…AAEE), 1557–1584 (SASM…SSSG), 1666–1686 (GESK…EMTP), 1715–1782 (RGRG…NRGS), and 1798–1849 (IGSP…PYLR). Over residues 1671-1684 (TLNLSGSPQSNREM) the composition is skewed to polar residues. Residues 1732–1742 (SRPPNTSRPPS) are compositionally biased toward low complexity. A compositionally biased stretch (polar residues) spans 1800–1818 (SPSSWTESGGGSYRSTSES).

This sequence belongs to the vir family. Component of the WMM complex, a N6-methyltransferase complex composed of a catalytic subcomplex, named MAC, and of an associated subcomplex, named MACOM. The MAC subcomplex is composed of Ime4/Mettl3 and Mettl14. The MACOM subcomplex is composed of fl(2)d, Flacc/Xio, Hakai, vir, and, in some cases of nito. Part of a complex containing fl(2)d, Sxl and vir.

The protein localises to the nucleus. Functionally, associated component of the WMM complex, a complex that mediates N6-methyladenosine (m6A) methylation of mRNAs, a modification that plays a role in the efficiency of mRNA splicing and is required for sex determination. Required for sex determination and dosage compensation via Sxl alternative splicing: m6A methylation acts as a key regulator of Sxl pre-mRNA and promotes female-specific alternative splicing of Sxl, which determines female physiognomy. M6A methylation is also required for neuronal functions. Required for proper inclusion of regulated exons in Ubx transcripts, leading to isoforms Ia/b and IIa/b. The chain is Protein virilizer (vir) from Drosophila pseudoobscura pseudoobscura (Fruit fly).